We begin with the raw amino-acid sequence, 151 residues long: MAENNPLKIHNLRPAPGAKTAKTRVGRGEASKGKTAGRGTKGTKARYQVPERFEGGQMPLHMRLPKLKGFKNPFRTEYQVVNLDKLTALYPEGGEVTVEGLVAKGAVRKNSLVKVLGQGEISVALQVTVDAVSGSAKEKITAAGGTVTELV.

Residues 1–60 (MAENNPLKIHNLRPAPGAKTAKTRVGRGEASKGKTAGRGTKGTKARYQVPERFEGGQMPL) form a disordered region.

The protein belongs to the universal ribosomal protein uL15 family. In terms of assembly, part of the 50S ribosomal subunit.

Functionally, binds to the 23S rRNA. This Streptomyces avermitilis (strain ATCC 31267 / DSM 46492 / JCM 5070 / NBRC 14893 / NCIMB 12804 / NRRL 8165 / MA-4680) protein is Large ribosomal subunit protein uL15.